Here is a 182-residue protein sequence, read N- to C-terminus: Probable nicotinate-nucleotide adenylyltransferase (182 aa).

The protein belongs to the NadD family.

The catalysed reaction is nicotinate beta-D-ribonucleotide + ATP + H(+) = deamido-NAD(+) + diphosphate. It functions in the pathway cofactor biosynthesis; NAD(+) biosynthesis; deamido-NAD(+) from nicotinate D-ribonucleotide: step 1/1. In terms of biological role, catalyzes the reversible adenylation of nicotinate mononucleotide (NaMN) to nicotinic acid adenine dinucleotide (NaAD). This chain is Probable nicotinate-nucleotide adenylyltransferase, found in Sulfurimonas denitrificans (strain ATCC 33889 / DSM 1251) (Thiomicrospira denitrificans (strain ATCC 33889 / DSM 1251)).